Here is a 479-residue protein sequence, read N- to C-terminus: Ribosomal RNA small subunit methyltransferase F (479 aa).

S-adenosyl-L-methionine contacts are provided by residues A125–K131, E149, D176, and D194. The active-site Nucleophile is C247.

This sequence belongs to the class I-like SAM-binding methyltransferase superfamily. RsmB/NOP family.

It localises to the cytoplasm. The catalysed reaction is cytidine(1407) in 16S rRNA + S-adenosyl-L-methionine = 5-methylcytidine(1407) in 16S rRNA + S-adenosyl-L-homocysteine + H(+). Functionally, specifically methylates the cytosine at position 1407 (m5C1407) of 16S rRNA. The chain is Ribosomal RNA small subunit methyltransferase F from Shigella boydii serotype 18 (strain CDC 3083-94 / BS512).